We begin with the raw amino-acid sequence, 819 residues long: uncharacterized protein (819 aa).

Serine 16 carries the phosphoserine modification. 2 disordered regions span residues 28–83 and 96–134; these read SNTQ…PPTV and PTFTLSVSPDSQSSSATHQNDYISSPHADFSFSPPASKI. Residues 36–63 constitute a DNA-binding region (zn(2)-C6 fungal-type); the sequence is KIRFTENENDLSPERAQKEPVSIPHGRY. 2 stretches are compositionally biased toward polar residues: residues 64-77 and 96-118; these read TWSTSPDTDSSHLP and PTFTLSVSPDSQSSSATHQNDYI.

The protein resides in the nucleus. This is an uncharacterized protein from Schizosaccharomyces pombe (strain 972 / ATCC 24843) (Fission yeast).